A 290-amino-acid polypeptide reads, in one-letter code: 4-hydroxybenzoate octaprenyltransferase (290 aa).

The next 8 helical transmembrane spans lie at 23 to 43, 46 to 66, 99 to 119, 141 to 161, 163 to 183, 212 to 232, 233 to 253, and 268 to 288; these read IGALLLLWPTLWALWVATPGM, LWILAVFVAGVWLMRAAGCVV, LFVVLVLLAFLLVLTLNAMTI, LPQVVLGAAFGWSIPMAFAAV, ESLPLSCWLMFLANILWAVAY, TLIIGILQLGVMALMALIGWL, NGLGWGYYWAVLVAGALFVYQ, and AFMNNNYVGLVLFLGLAMSYW.

This sequence belongs to the UbiA prenyltransferase family. Mg(2+) serves as cofactor.

The protein localises to the cell inner membrane. It carries out the reaction all-trans-octaprenyl diphosphate + 4-hydroxybenzoate = 4-hydroxy-3-(all-trans-octaprenyl)benzoate + diphosphate. It participates in cofactor biosynthesis; ubiquinone biosynthesis. In terms of biological role, catalyzes the prenylation of para-hydroxybenzoate (PHB) with an all-trans polyprenyl group. Mediates the second step in the final reaction sequence of ubiquinone-8 (UQ-8) biosynthesis, which is the condensation of the polyisoprenoid side chain with PHB, generating the first membrane-bound Q intermediate 3-octaprenyl-4-hydroxybenzoate. This chain is 4-hydroxybenzoate octaprenyltransferase, found in Salmonella typhi.